We begin with the raw amino-acid sequence, 292 residues long: MQIVLISGLSGSGKSIALKVLEDVGYYAVDNLPATLLPELVAELSDTGHERVAIAVDVRSGASLLALPQQVEHLHALASDLRLIFLDARDDTLIARFSETRRRHPLASEDVSLAEAIQSERDALASIAELGHRIDTSELHANTLRAWIKDFLAIEATEGLTLMFQSFGFKYGIPLDADLVFDVRCLPNPHYDLRLRPFTGKDQPVIEFLDSFPEVGRMCEDIRRFVATWLPSYARDNRSYLTVAIGCTGGQHRSVYIAEWLGRHFSDTLRVLVRHRSAARRIVDHGADMADK.

8 to 15 (GLSGSGKS) provides a ligand contact to ATP. 57 to 60 (DVRS) provides a ligand contact to GTP.

The protein belongs to the RapZ-like family.

Its function is as follows. Displays ATPase and GTPase activities. The polypeptide is Nucleotide-binding protein AZOSEA20610 (Aromatoleum aromaticum (strain DSM 19018 / LMG 30748 / EbN1) (Azoarcus sp. (strain EbN1))).